A 161-amino-acid polypeptide reads, in one-letter code: Zinc finger A20 and AN1 domain-containing stress-associated protein 9 (161 aa).

The segment at 17-51 adopts an A20-type zinc-finger fold; sequence PEAPILCVNNCGFFGSSMTNNMCSKCYRDFVKVTT. 4 residues coordinate Zn(2+): Cys23, Cys27, Cys39, and Cys42. Residues 62–99 are disordered; sequence FTPASSSKTPLEPAKPDEVPAAAVEDKQAAQEPPKPPS. A compositionally biased stretch (basic and acidic residues) spans 75 to 90; that stretch reads AKPDEVPAAAVEDKQA. An AN1-type zinc finger spans residues 96–142; sequence KPPSNRCLSCRKKVGLTGFQCRCGGTFCSTHRYTEAHDCTFDYKKAG. Zn(2+)-binding residues include Cys102, Cys105, Cys116, Cys118, Cys123, His126, His132, and Cys134.

May be involved in environmental stress response. The protein is Zinc finger A20 and AN1 domain-containing stress-associated protein 9 (SAP9) of Oryza sativa subsp. japonica (Rice).